We begin with the raw amino-acid sequence, 366 residues long: Caffeic acid 3-O-methyltransferase (366 aa).

131-137 is a substrate binding site; that stretch reads MNQDKIL. A substrate binding region spans residues 163–181; that stretch reads AFEYHGTDPRFNKIFNRGM. 5 residues coordinate S-adenosyl-L-methionine: Gly209, Asp232, Asp252, Met253, and Lys266. His270 acts as the Proton acceptor in catalysis.

This sequence belongs to the class I-like SAM-binding methyltransferase superfamily. Cation-independent O-methyltransferase family. COMT subfamily. As to quaternary structure, homodimer.

It catalyses the reaction (E)-caffeate + S-adenosyl-L-methionine = (E)-ferulate + S-adenosyl-L-homocysteine + H(+). Its pathway is aromatic compound metabolism; phenylpropanoid biosynthesis. Its function is as follows. Catalyzes the conversion of caffeic acid to ferulic acid and of 5-hydroxyferulic acid to sinapic acid. The resulting products may subsequently be converted to the corresponding alcohols that are incorporated into lignins. The polypeptide is Caffeic acid 3-O-methyltransferase (OMT) (Eucalyptus gunnii (Cider gum)).